We begin with the raw amino-acid sequence, 130 residues long: Translation initiation factor 5A (130 aa).

A Hypusine modification is found at Lys-36.

Belongs to the eIF-5A family.

It is found in the cytoplasm. Functions by promoting the formation of the first peptide bond. The protein is Translation initiation factor 5A (eif5a) of Methanothermobacter thermautotrophicus (strain ATCC 29096 / DSM 1053 / JCM 10044 / NBRC 100330 / Delta H) (Methanobacterium thermoautotrophicum).